The chain runs to 202 residues: Probable GTP-binding protein EngB (202 aa).

In terms of domain architecture, EngB-type G spans 22–197; it reads VFPEYAFIGR…LDYIENISKE (176 aa). GTP is bound by residues 30 to 37, 57 to 61, 75 to 78, 142 to 145, and 173 to 178; these read GRSNVGKS, GKTML, DLPG, TKAD, and YFISSS. Positions 37 and 59 each coordinate Mg(2+).

This sequence belongs to the TRAFAC class TrmE-Era-EngA-EngB-Septin-like GTPase superfamily. EngB GTPase family. The cofactor is Mg(2+).

Functionally, necessary for normal cell division and for the maintenance of normal septation. This chain is Probable GTP-binding protein EngB, found in Bacteroides thetaiotaomicron (strain ATCC 29148 / DSM 2079 / JCM 5827 / CCUG 10774 / NCTC 10582 / VPI-5482 / E50).